Reading from the N-terminus, the 380-residue chain is Cytochrome b (380 aa).

A run of 4 helical transmembrane segments spans residues 34-54, 78-99, 114-134, and 179-199; these read FGSL…LLAM, WLIR…YMHI, WNTG…GYVL, and FFAL…IHLT. Heme b is bound by residues histidine 84 and histidine 98. Residues histidine 183 and histidine 197 each coordinate heme b. Residue histidine 202 coordinates a ubiquinone. The next 4 helical transmembrane spans lie at 227–247, 289–309, 321–341, and 348–368; these read SKDI…ALFS, LGGV…PFLH, LSQM…WIGS, and FIII…ILLP.

Belongs to the cytochrome b family. The cytochrome bc1 complex contains 11 subunits: 3 respiratory subunits (MT-CYB, CYC1 and UQCRFS1), 2 core proteins (UQCRC1 and UQCRC2) and 6 low-molecular weight proteins (UQCRH/QCR6, UQCRB/QCR7, UQCRQ/QCR8, UQCR10/QCR9, UQCR11/QCR10 and a cleavage product of UQCRFS1). This cytochrome bc1 complex then forms a dimer. Heme b is required as a cofactor.

It is found in the mitochondrion inner membrane. Its function is as follows. Component of the ubiquinol-cytochrome c reductase complex (complex III or cytochrome b-c1 complex) that is part of the mitochondrial respiratory chain. The b-c1 complex mediates electron transfer from ubiquinol to cytochrome c. Contributes to the generation of a proton gradient across the mitochondrial membrane that is then used for ATP synthesis. This chain is Cytochrome b (MT-CYB), found in Caracara plancus (Southern caracara).